An 86-amino-acid chain; its full sequence is MIKNLSVRPSLIPREQRGSVESQVCYLTGRIKRLTEHLDLHGRDYSSQRGLWKIVGKRKRLLIYLFKKDRLRYKSLIGQLDMRGPR.

The protein belongs to the universal ribosomal protein uS15 family. In terms of assembly, part of the 30S ribosomal subunit.

It localises to the plastid. The protein localises to the chloroplast. This chain is Small ribosomal subunit protein uS15c (rps15), found in Cryptomeria japonica (Japanese cedar).